A 438-amino-acid chain; its full sequence is Putative F-box/FBD/LRR-repeat protein At2g05300 (438 aa).

The 47-residue stretch at Glu13–Ser59 folds into the F-box domain. 4 LRR repeats span residues Cys135–Asp166, Ile167–Val192, Cys235–Leu261, and Tyr318–Arg346. In terms of domain architecture, FBD spans Ser362–Pro409.

The chain is Putative F-box/FBD/LRR-repeat protein At2g05300 from Arabidopsis thaliana (Mouse-ear cress).